A 202-amino-acid chain; its full sequence is MIVKICGLKKAVDVAAAVDNGADMIGFVFAKSKRQVTVEKAHELAKNIPANVKKVGVFVNPTEEELMAAIKGVPLDIVQLHGQEPAKQANRTDAEVIKAFPVKDGKIPTNINDYPNAYILLDAPAEEYEGGSGKTFDWDKINRDMLTKNKLIIAGGLNAQNVQEAIKRFEPYAVDISSGVETNGEKDPEKIKCFIKTAKGVE.

It belongs to the TrpF family.

The catalysed reaction is N-(5-phospho-beta-D-ribosyl)anthranilate = 1-(2-carboxyphenylamino)-1-deoxy-D-ribulose 5-phosphate. It functions in the pathway amino-acid biosynthesis; L-tryptophan biosynthesis; L-tryptophan from chorismate: step 3/5. This Listeria monocytogenes serotype 4a (strain HCC23) protein is N-(5'-phosphoribosyl)anthranilate isomerase.